Consider the following 461-residue polypeptide: Bifunctional protein GlmU (461 aa).

The segment at 1 to 229 is pyrophosphorylase; it reads MEKYVVVLAA…FSESLGVNDR (229 aa). UDP-N-acetyl-alpha-D-glucosamine is bound by residues 8-11, Lys-22, Gln-72, and 77-78; these read LAAG and GT. Position 102 (Asp-102) interacts with Mg(2+). UDP-N-acetyl-alpha-D-glucosamine is bound by residues Gly-139, Glu-154, Asn-169, and Asn-227. Asn-227 contacts Mg(2+). Positions 230–250 are linker; that stretch reads VALAQATKTMQRRINEAHMRD. Residues 251-461 form an N-acetyltransferase region; that stretch reads GVSFIDPDTA…LPLSKDKDWE (211 aa). Positions 332 and 350 each coordinate UDP-N-acetyl-alpha-D-glucosamine. His-362 serves as the catalytic Proton acceptor. Positions 365 and 376 each coordinate UDP-N-acetyl-alpha-D-glucosamine. Acetyl-CoA contacts are provided by residues 385–386, Ala-422, and Arg-439; that span reads NY.

The protein in the N-terminal section; belongs to the N-acetylglucosamine-1-phosphate uridyltransferase family. It in the C-terminal section; belongs to the transferase hexapeptide repeat family. Homotrimer. It depends on Mg(2+) as a cofactor.

It is found in the cytoplasm. The catalysed reaction is alpha-D-glucosamine 1-phosphate + acetyl-CoA = N-acetyl-alpha-D-glucosamine 1-phosphate + CoA + H(+). It catalyses the reaction N-acetyl-alpha-D-glucosamine 1-phosphate + UTP + H(+) = UDP-N-acetyl-alpha-D-glucosamine + diphosphate. Its pathway is nucleotide-sugar biosynthesis; UDP-N-acetyl-alpha-D-glucosamine biosynthesis; N-acetyl-alpha-D-glucosamine 1-phosphate from alpha-D-glucosamine 6-phosphate (route II): step 2/2. The protein operates within nucleotide-sugar biosynthesis; UDP-N-acetyl-alpha-D-glucosamine biosynthesis; UDP-N-acetyl-alpha-D-glucosamine from N-acetyl-alpha-D-glucosamine 1-phosphate: step 1/1. It participates in bacterial outer membrane biogenesis; LPS lipid A biosynthesis. Catalyzes the last two sequential reactions in the de novo biosynthetic pathway for UDP-N-acetylglucosamine (UDP-GlcNAc). The C-terminal domain catalyzes the transfer of acetyl group from acetyl coenzyme A to glucosamine-1-phosphate (GlcN-1-P) to produce N-acetylglucosamine-1-phosphate (GlcNAc-1-P), which is converted into UDP-GlcNAc by the transfer of uridine 5-monophosphate (from uridine 5-triphosphate), a reaction catalyzed by the N-terminal domain. The protein is Bifunctional protein GlmU of Lactobacillus helveticus (strain DPC 4571).